We begin with the raw amino-acid sequence, 393 residues long: Triacylglycerol lipase 1 (393 aa).

The N-terminal stretch at Met-1–Gln-20 is a signal peptide. Asn-41 carries N-linked (GlcNAc...) asparagine glycosylation. Ser-166 (nucleophile) is an active-site residue. An N-linked (GlcNAc...) asparagine glycan is attached at Asn-261. Residues Asp-334 and His-363 each act as charge relay system in the active site.

This sequence belongs to the AB hydrolase superfamily. Lipase family. As to expression, expressed in seedlings, roots, leaves, flowers and siliques. Specifically expressed in the epidermis.

The protein resides in the secreted. It carries out the reaction a triacylglycerol + H2O = a diacylglycerol + a fatty acid + H(+). The catalysed reaction is 1,2,3-tributanoylglycerol + H2O = dibutanoylglycerol + butanoate + H(+). The enzyme catalyses 1,2,3-trioctanoylglycerol + H2O = dioctanoylglycerol + octanoate + H(+). Its pathway is lipid metabolism; glycerolipid metabolism. Functionally, triacylglycerol (TAG) lipase active on triolein, trioctanoin, tributyrin and 1,3-Diolein, but not on phospho- and galactolipids. Involved but dispensable for TAG storage breakdown during seed germination. The chain is Triacylglycerol lipase 1 from Arabidopsis thaliana (Mouse-ear cress).